We begin with the raw amino-acid sequence, 194 residues long: dITP/XTP pyrophosphatase (194 aa).

Residue 8–13 (TNNPHK) coordinates substrate. The Proton acceptor role is filled by D69. D69 contacts Mg(2+). Residues T70, 150–153 (FGYD), K173, and 178–179 (HR) contribute to the substrate site.

This sequence belongs to the HAM1 NTPase family. Homodimer. It depends on Mg(2+) as a cofactor.

It carries out the reaction XTP + H2O = XMP + diphosphate + H(+). The enzyme catalyses dITP + H2O = dIMP + diphosphate + H(+). It catalyses the reaction ITP + H2O = IMP + diphosphate + H(+). Pyrophosphatase that catalyzes the hydrolysis of nucleoside triphosphates to their monophosphate derivatives, with a high preference for the non-canonical purine nucleotides XTP (xanthosine triphosphate), dITP (deoxyinosine triphosphate) and ITP. Seems to function as a house-cleaning enzyme that removes non-canonical purine nucleotides from the nucleotide pool, thus preventing their incorporation into DNA/RNA and avoiding chromosomal lesions. In Porphyromonas gingivalis (strain ATCC BAA-308 / W83), this protein is dITP/XTP pyrophosphatase.